We begin with the raw amino-acid sequence, 545 residues long: T-complex protein 1 subunit alpha (545 aa).

Belongs to the TCP-1 chaperonin family. Heterooligomeric complex of about 850 to 900 kDa that forms two stacked rings, 12 to 16 nm in diameter.

It localises to the cytoplasm. Its function is as follows. Molecular chaperone; assists the folding of proteins upon ATP hydrolysis. Known to play a role, in vitro, in the folding of actin and tubulin. The polypeptide is T-complex protein 1 subunit alpha (TCP-1A) (Schistosoma mansoni (Blood fluke)).